The sequence spans 409 residues: Phosphoglycerate kinase (409 aa).

Residues 22 to 24, arginine 37, 60 to 63, arginine 122, and arginine 164 each bind substrate; these read DLN and HLSR. ATP is bound by residues lysine 215, glutamate 338, and 365–368; that span reads GGDS.

The protein belongs to the phosphoglycerate kinase family. As to quaternary structure, monomer.

The protein localises to the cytoplasm. The catalysed reaction is (2R)-3-phosphoglycerate + ATP = (2R)-3-phospho-glyceroyl phosphate + ADP. It participates in carbohydrate degradation; glycolysis; pyruvate from D-glyceraldehyde 3-phosphate: step 2/5. The polypeptide is Phosphoglycerate kinase (pgk) (Mycoplasma pneumoniae (strain ATCC 29342 / M129 / Subtype 1) (Mycoplasmoides pneumoniae)).